The chain runs to 208 residues: Transcription factor atf-4 homolog (208 aa).

Disordered stretches follow at residues 18 to 47 (HNQT…YFNP) and 106 to 165 (ERRS…EKEE). A compositionally biased stretch (low complexity) spans 110 to 120 (NSSASPASNWS). The span at 121 to 141 (SDEHDSQSEKSYHPYKTPEKK) shows a compositional bias: basic and acidic residues. The bZIP domain occupies 138–201 (PEKKERKKAQ…RYFKKFMTEM (64 aa)). Residues 140–163 (KKERKKAQNRLAATRYREKKRREK) form a basic motif region. Residues 173-187 (LSVTNGKLKDQVSEL) are leucine-zipper.

This sequence belongs to the bZIP family.

It localises to the nucleus. Its function is as follows. Transcription factor. Involved in positively modulating longevity and stress tolerance, probably acting by positively regulating expression of transsulfuration enzyme cth-2, leading to increased hydrogen sulfide production and therefore increased protein persulfidation, a protective modification of redox-reactive cysteines. May mediate longevity and increased stress resistance induced by mTORC1 suppression. The sequence is that of Transcription factor atf-4 homolog from Caenorhabditis elegans.